Here is a 103-residue protein sequence, read N- to C-terminus: Integration host factor subunit alpha (103 aa).

It belongs to the bacterial histone-like protein family. In terms of assembly, heterodimer of an alpha and a beta chain.

In terms of biological role, this protein is one of the two subunits of integration host factor, a specific DNA-binding protein that functions in genetic recombination as well as in transcriptional and translational control. In Bartonella bacilliformis (strain ATCC 35685 / KC583 / Herrer 020/F12,63), this protein is Integration host factor subunit alpha.